The primary structure comprises 201 residues: B-cell CLL/lymphoma 7 protein family member B-B (201 aa).

Residues Gln-104–Ser-201 are disordered.

This sequence belongs to the BCL7 family.

The chain is B-cell CLL/lymphoma 7 protein family member B-B from Danio rerio (Zebrafish).